A 425-amino-acid chain; its full sequence is Monoacylglycerol lipase ABHD2 (425 aa).

Over 1-9 the chain is Cytoplasmic; sequence MNAMLETPE. A helical; Signal-anchor for type II membrane protein membrane pass occupies residues 10–30; the sequence is LPAVFDGVKLAAVAAVLYVIV. Residues 31–425 lie on the Extracellular side of the membrane; that stretch reads RCLNLKSPTA…DTEQVEADLE (395 aa). An AB hydrolase-1 domain is found at 128 to 382; the sequence is MVICPGIANH…HGGHLGFFEG (255 aa). A glycan (N-linked (GlcNAc...) asparagine) is linked at Asn136. The Nucleophile role is filled by Ser207. Active-site charge relay system residues include Asp345 and His376.

This sequence belongs to the AB hydrolase superfamily. AB hydrolase 4 family. As to expression, present in sperm (at protein level).

The protein localises to the cell projection. The protein resides in the cilium. It is found in the flagellum membrane. Its subcellular location is the cell membrane. The catalysed reaction is an acetyl ester + H2O = an aliphatic alcohol + acetate + H(+). The enzyme catalyses Hydrolyzes glycerol monoesters of long-chain fatty acids.. It carries out the reaction a triacylglycerol + H2O = a diacylglycerol + a fatty acid + H(+). It catalyses the reaction 2-(5Z,8Z,11Z,14Z-eicosatetraenoyl)-glycerol + H2O = glycerol + (5Z,8Z,11Z,14Z)-eicosatetraenoate + H(+). The catalysed reaction is a butanoate ester + H2O = an aliphatic alcohol + butanoate + H(+). The enzyme catalyses hexadecanoate ester + H2O = an aliphatic alcohol + hexadecanoate + H(+). Acylglycerol lipase activity is activated upon binding to progesterone. Progesterone-dependent acylglycerol lipase that catalyzes hydrolysis of endocannabinoid arachidonoylglycerol (AG) from cell membrane. Acts as a progesterone receptor: progesterone-binding activates the acylglycerol lipase activity, mediating degradation of 1-arachidonoylglycerol (1AG) and 2-arachidonoylglycerol (2AG) to glycerol and arachidonic acid (AA). Also displays an ester hydrolase activity against acetyl ester, butanoate ester and hexadecanoate ester. Plays a key role in sperm capacitation in response to progesterone by mediating degradation of 2AG, an inhibitor of the sperm calcium channel CatSper, leading to calcium influx via CatSper and sperm activation. May also play a role in smooth muscle cells migration. The sequence is that of Monoacylglycerol lipase ABHD2 from Homo sapiens (Human).